Here is a 348-residue protein sequence, read N- to C-terminus: Probable dual-specificity RNA methyltransferase RlmN (348 aa).

The Proton acceptor role is filled by glutamate 92. A Radical SAM core domain is found at 98–331 (HPDRVTACIS…NEIRREKGTD (234 aa)). An intrachain disulfide couples cysteine 105 to cysteine 336. Residues cysteine 112, cysteine 116, and cysteine 119 each coordinate [4Fe-4S] cluster. S-adenosyl-L-methionine is bound by residues 159–160 (GE), serine 191, 214–216 (SLH), and asparagine 290. The S-methylcysteine intermediate role is filled by cysteine 336.

This sequence belongs to the radical SAM superfamily. RlmN family. It depends on [4Fe-4S] cluster as a cofactor.

It localises to the cytoplasm. The enzyme catalyses adenosine(2503) in 23S rRNA + 2 reduced [2Fe-2S]-[ferredoxin] + 2 S-adenosyl-L-methionine = 2-methyladenosine(2503) in 23S rRNA + 5'-deoxyadenosine + L-methionine + 2 oxidized [2Fe-2S]-[ferredoxin] + S-adenosyl-L-homocysteine. It catalyses the reaction adenosine(37) in tRNA + 2 reduced [2Fe-2S]-[ferredoxin] + 2 S-adenosyl-L-methionine = 2-methyladenosine(37) in tRNA + 5'-deoxyadenosine + L-methionine + 2 oxidized [2Fe-2S]-[ferredoxin] + S-adenosyl-L-homocysteine. In terms of biological role, specifically methylates position 2 of adenine 2503 in 23S rRNA and position 2 of adenine 37 in tRNAs. The polypeptide is Probable dual-specificity RNA methyltransferase RlmN (Fervidobacterium nodosum (strain ATCC 35602 / DSM 5306 / Rt17-B1)).